Reading from the N-terminus, the 602-residue chain is Elongation factor 4 (602 aa).

Residues alanine 7–lysine 189 form the tr-type G domain. Residues aspartate 19–threonine 24 and asparagine 136–aspartate 139 each bind GTP.

It belongs to the TRAFAC class translation factor GTPase superfamily. Classic translation factor GTPase family. LepA subfamily.

It localises to the cell inner membrane. It catalyses the reaction GTP + H2O = GDP + phosphate + H(+). Required for accurate and efficient protein synthesis under certain stress conditions. May act as a fidelity factor of the translation reaction, by catalyzing a one-codon backward translocation of tRNAs on improperly translocated ribosomes. Back-translocation proceeds from a post-translocation (POST) complex to a pre-translocation (PRE) complex, thus giving elongation factor G a second chance to translocate the tRNAs correctly. Binds to ribosomes in a GTP-dependent manner. The polypeptide is Elongation factor 4 (Prochlorococcus marinus (strain SARG / CCMP1375 / SS120)).